The following is a 191-amino-acid chain: Peptidyl-tRNA hydrolase (191 aa).

Tyr14 lines the tRNA pocket. His19 (proton acceptor) is an active-site residue. Phe64, Asn66, and Asn112 together coordinate tRNA.

The protein belongs to the PTH family. As to quaternary structure, monomer.

It localises to the cytoplasm. The enzyme catalyses an N-acyl-L-alpha-aminoacyl-tRNA + H2O = an N-acyl-L-amino acid + a tRNA + H(+). In terms of biological role, hydrolyzes ribosome-free peptidyl-tRNAs (with 1 or more amino acids incorporated), which drop off the ribosome during protein synthesis, or as a result of ribosome stalling. Functionally, catalyzes the release of premature peptidyl moieties from peptidyl-tRNA molecules trapped in stalled 50S ribosomal subunits, and thus maintains levels of free tRNAs and 50S ribosomes. The sequence is that of Peptidyl-tRNA hydrolase from Novosphingobium aromaticivorans (strain ATCC 700278 / DSM 12444 / CCUG 56034 / CIP 105152 / NBRC 16084 / F199).